Consider the following 397-residue polypeptide: ORC1-type DNA replication protein 8 (397 aa).

ATP-binding positions include 61 to 65 (VGKTA), Tyr-211, and Arg-223.

This sequence belongs to the CDC6/cdc18 family.

Its function is as follows. Involved in regulation of DNA replication. The protein is ORC1-type DNA replication protein 8 (orc8) of Halobacterium salinarum (strain ATCC 700922 / JCM 11081 / NRC-1) (Halobacterium halobium).